Consider the following 746-residue polypeptide: H(+)/Cl(-) exchange transporter 5 (746 aa).

Residues 1–54 (MDFLEEPIPGVGTYDDFNTIDWVREKSRDRDRHREITNRSKESTWALIHSVSDA) lie on the Cytoplasmic side of the membrane. A run of 2 helical transmembrane segments spans residues 55–92 (FSGW…ICTE) and 138–161 (VNYF…VKVF). The Selectivity filter part_1 signature appears at 167-171 (GSGIP). Chloride is bound at residue Ser168. Residues 170 to 177 (IPEIKTIL) constitute an intramembrane region (helical). Transmembrane regions (helical) follow at residues 186–205 (LGKW…VSSG) and 211–230 (EGPL…HCFN). Positions 209 to 213 (GKEGP) match the Selectivity filter part_2 motif. 2 consecutive intramembrane regions (helical) follow at residues 242–254 (VLSA…VSVA) and 258–266 (PIGGVLFSL). 5 helical membrane-spanning segments follow: residues 278 to 296 (LWRS…RSIN), 319 to 344 (LVPF…IAWC), 352 to 372 (LGKY…ILAF), 428 to 448 (MWQL…TFGM), and 453 to 472 (GLFI…LGVG). Residues 453–457 (GLFIP) carry the Selectivity filter part_3 motif. A chloride-binding site is contributed by Phe455. Residues 500-514 (GLYAMVGAAACLGGV) constitute an intramembrane region (helical). Positions 515-517 (TRM) form an intramembrane region, note=Loop between two helices. The segment at residues 518-529 (TVSLVVIMFELT) is an intramembrane region (helical). The note=Loop between two helices intramembrane region spans 530–534 (GGLEY). A helical transmembrane segment spans residues 535–552 (IVPLMAAAMTSKWVADAL). The Cytoplasmic segment spans residues 553–746 (GREGIYDAHI…NQDPDSILFN (194 aa)). Residue Tyr558 participates in chloride binding. 2 consecutive CBS domains span residues 586-650 (MKPR…ARKE) and 682-742 (ILDL…DPDS). Residues Thr596, 617–619 (YSG), and 724–727 (TKKD) contribute to the ATP site.

It belongs to the chloride channel (TC 2.A.49) family. ClC-5/CLCN5 subfamily. Interacts with NEDD4 and NEDD4L. In terms of processing, ubiquitinated by NEDD4L in the presence of albumin; which promotes endocytosis and proteasomal degradation. As to expression, detected in duodenum, jejunum and ileum. Detected in crypt and villus regions of the epithelium of the small intestine.

The protein localises to the golgi apparatus membrane. It is found in the endosome membrane. The protein resides in the cell membrane. It catalyses the reaction 2 chloride(in) + H(+)(out) = 2 chloride(out) + H(+)(in). In terms of biological role, proton-coupled chloride transporter. Functions as antiport system and exchanges chloride ions against protons. Important for normal acidification of the endosome lumen. May play an important role in renal tubular function. The CLC channel family contains both chloride channels and proton-coupled anion transporters that exchange chloride or another anion for protons. The absence of conserved gating glutamate residues is typical for family members that function as channels. The chain is H(+)/Cl(-) exchange transporter 5 (CLCN5) from Cavia porcellus (Guinea pig).